A 260-amino-acid polypeptide reads, in one-letter code: tRNA (guanine-N(1)-)-methyltransferase (260 aa).

S-adenosyl-L-methionine-binding positions include G117 and 137 to 142 (LGDFVL).

The protein belongs to the RNA methyltransferase TrmD family. As to quaternary structure, homodimer.

It is found in the cytoplasm. The enzyme catalyses guanosine(37) in tRNA + S-adenosyl-L-methionine = N(1)-methylguanosine(37) in tRNA + S-adenosyl-L-homocysteine + H(+). In terms of biological role, specifically methylates guanosine-37 in various tRNAs. In Cupriavidus metallidurans (strain ATCC 43123 / DSM 2839 / NBRC 102507 / CH34) (Ralstonia metallidurans), this protein is tRNA (guanine-N(1)-)-methyltransferase.